A 396-amino-acid chain; its full sequence is Elongation factor Tu (396 aa).

The tr-type G domain occupies 11–205; that stretch reads KPHVNIGTIG…VIDEYIPTPV (195 aa). The segment at 20–27 is G1; that stretch reads GHVDHGKT. GTP is bound at residue 20–27; sequence GHVDHGKT. Threonine 27 is a Mg(2+) binding site. The segment at 61-65 is G2; sequence GITIN. The segment at 82–85 is G3; that stretch reads DAPG. GTP is bound by residues 82-86 and 137-140; these read DAPGH and NKTD. A G4 region spans residues 137-140; that stretch reads NKTD. The segment at 175 to 177 is G5; that stretch reads SAL.

It belongs to the TRAFAC class translation factor GTPase superfamily. Classic translation factor GTPase family. EF-Tu/EF-1A subfamily. As to quaternary structure, monomer.

The protein localises to the cytoplasm. It catalyses the reaction GTP + H2O = GDP + phosphate + H(+). Its function is as follows. GTP hydrolase that promotes the GTP-dependent binding of aminoacyl-tRNA to the A-site of ribosomes during protein biosynthesis. This chain is Elongation factor Tu, found in Oenococcus oeni (strain ATCC BAA-331 / PSU-1).